The primary structure comprises 291 residues: Elongation factor Ts (291 aa).

Positions 79 to 82 (TDFV) are involved in Mg(2+) ion dislocation from EF-Tu.

Belongs to the EF-Ts family.

Its subcellular location is the cytoplasm. Associates with the EF-Tu.GDP complex and induces the exchange of GDP to GTP. It remains bound to the aminoacyl-tRNA.EF-Tu.GTP complex up to the GTP hydrolysis stage on the ribosome. This is Elongation factor Ts from Leuconostoc mesenteroides subsp. mesenteroides (strain ATCC 8293 / DSM 20343 / BCRC 11652 / CCM 1803 / JCM 6124 / NCDO 523 / NBRC 100496 / NCIMB 8023 / NCTC 12954 / NRRL B-1118 / 37Y).